A 387-amino-acid chain; its full sequence is Galactokinase (387 aa).

33 to 36 provides a ligand contact to substrate; it reads EHID. ATP-binding positions include Ser67 and 124–130; that span reads GAGLSSS. The Mg(2+) site is built by Ser130 and Glu162. Asp174 functions as the Proton acceptor in the catalytic mechanism. Tyr224 is a binding site for substrate.

This sequence belongs to the GHMP kinase family. GalK subfamily.

It is found in the cytoplasm. The enzyme catalyses alpha-D-galactose + ATP = alpha-D-galactose 1-phosphate + ADP + H(+). Its pathway is carbohydrate metabolism; galactose metabolism. Its function is as follows. Catalyzes the transfer of the gamma-phosphate of ATP to D-galactose to form alpha-D-galactose-1-phosphate (Gal-1-P). In Clostridium perfringens (strain 13 / Type A), this protein is Galactokinase.